The following is a 1668-amino-acid chain: Probable histone acetyltransferase HAC-like 1 (1668 aa).

3 disordered regions span residues 1–34 (MNVG…ADGL), 459–493 (QQQP…SEQG), and 528–551 (KGGQ…HDSQ). A compositionally biased stretch (polar residues) spans 11–23 (GQMSGQAPQTNQV). Residues 459–469 (QQQPNSQHQQS) are compositionally biased toward low complexity. Polar residues-rich tracts occupy residues 470-491 (ILRS…QLSE) and 536-551 (LSSS…HDSQ). The segment at 651–732 (AAGNIYYFRQ…DLQCPVCSNA (82 aa)) adopts a TAZ-type 1 zinc-finger fold. Positions 886–899 (KETSETAPEVKNEA) are enriched in basic and acidic residues. The disordered stretch occupies residues 886-912 (KETSETAPEVKNEANDSTDITVSKSGK). Residues 900-909 (NDSTDITVSK) are compositionally biased toward polar residues. The PHD-type zinc-finger motif lies at 1002 to 1079 (HFFCIPCYNE…EYTCPNCYVE (78 aa)). The CBP/p300-type HAT domain occupies 1094-1530 (VLGAKDLPRT…VLYHLHNPTA (437 aa)). Acetyl-CoA is bound by residues 1217–1219 (LDS), 1236–1237 (RT), and tryptophan 1292. Residues 1342–1365 (GAAEDMINQLRQEEDDRKQQKKGK) are a coiled coil. A ZZ-type zinc finger spans residues 1412–1475 (HLQYSCSHCC…TLHPVDIVGL (64 aa)). Residues cysteine 1417, cysteine 1420, cysteine 1432, cysteine 1435, cysteine 1441, cysteine 1444, histidine 1457, and histidine 1465 each contribute to the Zn(2+) site. The segment at 1553–1634 (EVCPDFDLRK…GCNVPRCRDL (82 aa)) adopts a TAZ-type 2 zinc-finger fold. Residues 1630 to 1650 (RCRDLKEHLRRLQQQSDSRRR) adopt a coiled-coil conformation.

The protein resides in the nucleus. The enzyme catalyses L-lysyl-[protein] + acetyl-CoA = N(6)-acetyl-L-lysyl-[protein] + CoA + H(+). In terms of biological role, acetyltransferase enzyme. Acetylates histones, giving a specific tag for transcriptional activation. The polypeptide is Probable histone acetyltransferase HAC-like 1 (Oryza sativa subsp. japonica (Rice)).